Here is a 505-residue protein sequence, read N- to C-terminus: L-carnitine/gamma-butyrobetaine antiporter (505 aa).

The next 12 helical transmembrane spans lie at 10 to 30, 50 to 70, 92 to 112, 143 to 163, 195 to 215, 231 to 251, 263 to 283, 316 to 336, 347 to 367, 403 to 423, 446 to 466, and 475 to 495; these read IEPK…WLTV, IWGW…FWLV, IFMM…SIEI, GPLP…FFFV, FYLV…TPLV, LDAI…ACGL, SYLS…SFIM, WTVF…IFLA, LCFG…TVLG, FSTA…VTLI, LLVR…LLAL, and AIIA…LSFI.

The protein belongs to the BCCT transporter (TC 2.A.15) family. CaiT subfamily. In terms of assembly, homotrimer.

Its subcellular location is the cell inner membrane. It catalyses the reaction 4-(trimethylamino)butanoate(in) + (R)-carnitine(out) = 4-(trimethylamino)butanoate(out) + (R)-carnitine(in). It functions in the pathway amine and polyamine metabolism; carnitine metabolism. In terms of biological role, catalyzes the exchange of L-carnitine for gamma-butyrobetaine. The polypeptide is L-carnitine/gamma-butyrobetaine antiporter (Citrobacter koseri (strain ATCC BAA-895 / CDC 4225-83 / SGSC4696)).